The sequence spans 856 residues: V-type proton ATPase subunit a (856 aa).

The Cytoplasmic segment spans residues 1-409; sequence MAPKQDTPFR…NAYGTATYQE (409 aa). A helical membrane pass occupies residues 410 to 428; it reads VNPAIPVIVTFPFLFAVMF. Residues 429 to 430 are Vacuolar-facing; it reads GD. The chain crosses the membrane as a helical span at residues 431–447; it reads FGHALIMLCAALAMIYW. Residues 448-460 are Cytoplasmic-facing; the sequence is EKPLKKVTFELFA. A helical membrane pass occupies residues 461–490; sequence MVFYGRYIVLVMAVFSVYTGLIYNDVFSKS. Over 491–544 the chain is Vacuolar; sequence MTLFDSQWKWVVPENFKEGMTVKAVLREPNGYRYPFGLDWRWHGTENELLFINS. The chain crosses the membrane as a helical span at residues 545 to 564; it reads YKMKMAIILGWAHMTYSLCF. Residues 565-582 are Cytoplasmic-facing; sequence SYINARHFKRPIDIWGNF. A helical transmembrane segment spans residues 583–603; that stretch reads VPGMIFFQSIFGYLVLCIIYK. Over 604 to 648 the chain is Vacuolar; that stretch reads WSVDWFGTGRQPPGLLNMLIYMFLQPGTLDGGVELYPGQATVQVI. The chain crosses the membrane as a helical span at residues 649-668; that stretch reads LLLLAVIQVPILLFLKPFYL. The Cytoplasmic segment spans residues 669–738; it reads RWENNRARAK…EVMIHQVIHT (70 aa). The tract at residues 689–710 is disordered; sequence VSALDEDDEEDPSNGDDYEGAA. Residues 692 to 707 show a composition bias toward acidic residues; the sequence is LDEDDEEDPSNGDDYE. Residues 739-763 form a helical membrane-spanning segment; sequence IEFCLNSVSHTASYLRLWALSLAHQ. At 764–784 the chain is on the vacuolar side; that stretch reads QLSAVLWSMTMAKALESKGLG. Residues 785-823 form a helical membrane-spanning segment; it reads GAIFLVVAFAMFFVLSVIILIIMEGVSAMLHSLRLAWVE. Topologically, residues 824 to 856 are cytoplasmic; the sequence is SFSKFAEFGGWPFTPFSFKQQLEESEELKEYIG.

The protein belongs to the V-ATPase 116 kDa subunit family. As to quaternary structure, V-ATPase is a heteromultimeric enzyme composed of a peripheral catalytic V1 complex (components A to H) attached to an integral membrane V0 proton pore complex (components: a, c, c', c'', d, e, f and VOA1).

It is found in the vacuole membrane. Its function is as follows. Subunit of the V0 complex of vacuolar(H+)-ATPase (V-ATPase), a multisubunit enzyme composed of a peripheral complex (V1) that hydrolyzes ATP and a membrane integral complex (V0) that translocates protons. V-ATPase is responsible for acidifying and maintaining the pH of intracellular compartments. The sequence is that of V-type proton ATPase subunit a (vph-1) from Neurospora crassa (strain ATCC 24698 / 74-OR23-1A / CBS 708.71 / DSM 1257 / FGSC 987).